The chain runs to 402 residues: Tryptophan synthase beta chain 2 (402 aa).

Residue Lys-97 is modified to N6-(pyridoxal phosphate)lysine.

The protein belongs to the TrpB family. As to quaternary structure, tetramer of two alpha and two beta chains. It depends on pyridoxal 5'-phosphate as a cofactor.

It catalyses the reaction (1S,2R)-1-C-(indol-3-yl)glycerol 3-phosphate + L-serine = D-glyceraldehyde 3-phosphate + L-tryptophan + H2O. It functions in the pathway amino-acid biosynthesis; L-tryptophan biosynthesis; L-tryptophan from chorismate: step 5/5. Functionally, the beta subunit is responsible for the synthesis of L-tryptophan from indole and L-serine. The protein is Tryptophan synthase beta chain 2 (trpB2) of Wolinella succinogenes (strain ATCC 29543 / DSM 1740 / CCUG 13145 / JCM 31913 / LMG 7466 / NCTC 11488 / FDC 602W) (Vibrio succinogenes).